The chain runs to 356 residues: MTRPIQASLDLQALKQNLSIVRQAAPHARVWSVVKANAYGHGIERIWSALGATDGFALLNLEEAITLRERGWKGPILMLEGFFHAQDLEMYDQHRLTTCVHSNWQLKALQNARLKAPLDIYLKVNSGMNRLGFQPDRVLTVWQQLRAMANVGEMTLMSHFAEAEHPDGISGAMARIEQAAEGLECRRSLSNSAATLWHPEAHFDWVRPGIILYGASPSGQWRDIANTGLRPVMTLSSEIIGVQTLKAGERVGYGGRYTARDEQRIGIVAAGYADGYPRHAPTGTPVLVDGVRTMTVGTVSMDMLAVDLTPCPQAGIGTPVELWGKEIKIDDVAAAAGTVGYELMCALALRVPVVTV.

The Proton acceptor; specific for D-alanine role is filled by Lys-35. Lys-35 is subject to N6-(pyridoxal phosphate)lysine. Arg-130 provides a ligand contact to substrate. Tyr-253 functions as the Proton acceptor; specific for L-alanine in the catalytic mechanism. Residue Met-301 participates in substrate binding.

The protein belongs to the alanine racemase family. Pyridoxal 5'-phosphate serves as cofactor.

It carries out the reaction L-alanine = D-alanine. Functionally, isomerizes L-alanine to D-alanine which is then oxidized to pyruvate by DadA. This is Alanine racemase, catabolic (dadX) from Escherichia coli O157:H7.